The primary structure comprises 394 residues: Short-chain dehydrogenase/reductase family 42E member 1 (394 aa).

Catalysis depends on Y153, which acts as the Proton acceptor. K157 contributes to the NAD(+) binding site. 2 helical membrane-spanning segments follow: residues 283–303 (LPLTLIYCLAFLVEMTHFIVG) and 367–387 (FMLWDGILILLLALSVLTWIL).

Belongs to the 3-beta-HSD family.

The protein resides in the membrane. This chain is Short-chain dehydrogenase/reductase family 42E member 1 (Sdr42e1), found in Mus musculus (Mouse).